Reading from the N-terminus, the 986-residue chain is Isoleucine--tRNA ligase (986 aa).

A 'KMSKS' region motif is present at residues 534-538 (EMHKS). Position 537 (Lys-537) interacts with ATP.

This sequence belongs to the class-I aminoacyl-tRNA synthetase family. IleS type 2 subfamily. As to quaternary structure, monomer. Requires Zn(2+) as cofactor.

The protein localises to the cytoplasm. The catalysed reaction is tRNA(Ile) + L-isoleucine + ATP = L-isoleucyl-tRNA(Ile) + AMP + diphosphate. In terms of biological role, catalyzes the attachment of isoleucine to tRNA(Ile). As IleRS can inadvertently accommodate and process structurally similar amino acids such as valine, to avoid such errors it has two additional distinct tRNA(Ile)-dependent editing activities. One activity is designated as 'pretransfer' editing and involves the hydrolysis of activated Val-AMP. The other activity is designated 'posttransfer' editing and involves deacylation of mischarged Val-tRNA(Ile). This Saccharolobus solfataricus (strain ATCC 35092 / DSM 1617 / JCM 11322 / P2) (Sulfolobus solfataricus) protein is Isoleucine--tRNA ligase (ileS).